A 171-amino-acid chain; its full sequence is 3-hydroxydecanoyl-[acyl-carrier-protein] dehydratase (171 aa).

The active site involves H70.

This sequence belongs to the thioester dehydratase family. FabA subfamily. In terms of assembly, homodimer.

It is found in the cytoplasm. The catalysed reaction is a (3R)-hydroxyacyl-[ACP] = a (2E)-enoyl-[ACP] + H2O. It catalyses the reaction (3R)-hydroxydecanoyl-[ACP] = (2E)-decenoyl-[ACP] + H2O. The enzyme catalyses (2E)-decenoyl-[ACP] = (3Z)-decenoyl-[ACP]. It participates in lipid metabolism; fatty acid biosynthesis. Necessary for the introduction of cis unsaturation into fatty acids. Catalyzes the dehydration of (3R)-3-hydroxydecanoyl-ACP to E-(2)-decenoyl-ACP and then its isomerization to Z-(3)-decenoyl-ACP. Can catalyze the dehydratase reaction for beta-hydroxyacyl-ACPs with saturated chain lengths up to 16:0, being most active on intermediate chain length. The protein is 3-hydroxydecanoyl-[acyl-carrier-protein] dehydratase of Pseudomonas fluorescens (strain ATCC BAA-477 / NRRL B-23932 / Pf-5).